A 218-amino-acid chain; its full sequence is Adenylate kinase (218 aa).

10–15 (GAGKGT) contacts ATP. The NMP stretch occupies residues 30–59 (STGDMLRAAVKAGTPLGLEAKKVMDAGGLV). Residues T31, R36, 57-59 (GLV), 85-88 (GFPR), and Q92 contribute to the AMP site. An LID region spans residues 122 to 159 (GRRVHVASGRTYHVKFNPPKVAGKDDETGEDLIQRADD). Residues R123 and 132–133 (TY) contribute to the ATP site. Residues R156 and R167 each coordinate AMP. Residue G203 participates in ATP binding.

It belongs to the adenylate kinase family. In terms of assembly, monomer.

It localises to the cytoplasm. It carries out the reaction AMP + ATP = 2 ADP. It functions in the pathway purine metabolism; AMP biosynthesis via salvage pathway; AMP from ADP: step 1/1. Its function is as follows. Catalyzes the reversible transfer of the terminal phosphate group between ATP and AMP. Plays an important role in cellular energy homeostasis and in adenine nucleotide metabolism. The sequence is that of Adenylate kinase from Laribacter hongkongensis (strain HLHK9).